Here is a 1750-residue protein sequence, read N- to C-terminus: Protein TIC 214 (1750 aa).

Helical transmembrane passes span Lys-12 to Ile-32, Phe-69 to Leu-89, Ile-97 to Ala-117, Leu-129 to Leu-149, Phe-177 to Ile-197, and Ile-216 to Cys-236. Basic and acidic residues predominate over residues Arg-260–Ser-277. Disordered regions lie at residues Arg-260–Pro-282, Ala-617–Ser-638, Ser-718–Glu-738, Arg-1205–Val-1225, and Glu-1419–Glu-1512. The span at Ala-617–Asp-629 shows a compositional bias: low complexity. Positions Lys-727 to Glu-738 are enriched in basic and acidic residues. A compositionally biased stretch (basic and acidic residues) spans Thr-1420 to Glu-1512.

Belongs to the TIC214 family. In terms of assembly, part of the Tic complex.

The protein localises to the plastid. It is found in the chloroplast inner membrane. In terms of biological role, involved in protein precursor import into chloroplasts. May be part of an intermediate translocation complex acting as a protein-conducting channel at the inner envelope. In Cuscuta reflexa (Southern Asian dodder), this protein is Protein TIC 214.